The following is a 211-amino-acid chain: Mitotic spindle assembly checkpoint protein MAD2B (211 aa).

Positions 13 to 203 (QVVADILCEF…SDILKMQLYV (191 aa)) constitute an HORMA domain.

Homooligomer. Interacts with rev1. Interacts with rev3l. Interacts with fzr1 (in complex with the anaphase promoting complex APC). May interact with cdc20.

The protein localises to the nucleus. The protein resides in the cytoplasm. It localises to the cytoskeleton. It is found in the spindle. In terms of biological role, adapter protein able to interact with different proteins and involved in different biological processes. Mediates the interaction between the error-prone DNA polymerase zeta catalytic subunit rev3l and the inserter polymerase rev1, thereby mediating the second polymerase switching in translesion DNA synthesis. Translesion DNA synthesis releases the replication blockade of replicative polymerases, stalled in presence of DNA lesions. May also play a role in signal transduction in response to DNA damage. May regulate the activation of the anaphase promoting complex APC thereby regulating progression through the cell cycle. Through transcriptional regulation may play a role in epithelial-mesenchymal transdifferentiation. This chain is Mitotic spindle assembly checkpoint protein MAD2B (mad2l2), found in Xenopus tropicalis (Western clawed frog).